Here is a 372-residue protein sequence, read N- to C-terminus: N-methyl-L-tryptophan oxidase (372 aa).

4-34 (DLIIIGSGSVGAAAGYYATRAGLNVLMTDAH) provides a ligand contact to FAD. At C308 the chain carries S-8alpha-FAD cysteine.

This sequence belongs to the MSOX/MTOX family. MTOX subfamily. Monomer. The cofactor is FAD.

It catalyses the reaction N(alpha)-methyl-L-tryptophan + O2 + H2O = L-tryptophan + formaldehyde + H2O2. Functionally, catalyzes the oxidative demethylation of N-methyl-L-tryptophan. This is N-methyl-L-tryptophan oxidase from Escherichia coli (strain SMS-3-5 / SECEC).